Here is a 192-residue protein sequence, read N- to C-terminus: Ras-like protein 2 (192 aa).

12–19 (GGGGVGKS) contributes to the GTP binding site. An Effector region motif is present at residues 34 to 42 (YDPTIEDSY). Residue Cys-46 is the site of S-palmitoyl cysteine attachment. Residues 59 to 63 (DTAGQ) and 118 to 121 (NKCD) contribute to the GTP site. S-palmitoyl cysteine attachment occurs at residues Cys-120 and Cys-147. At Cys-189 the chain carries Cysteine methyl ester. Cys-189 is lipidated: S-farnesyl cysteine. The propeptide at 190–192 (CLM) is removed in mature form.

This sequence belongs to the small GTPase superfamily. Ras family. Interacts with hzg.

The protein localises to the cell membrane. It catalyses the reaction GTP + H2O = GDP + phosphate + H(+). Its activity is regulated as follows. Alternates between an inactive form bound to GDP and an active form bound to GTP. Activated by a guanine nucleotide-exchange factor (GEF) and inactivated by a GTPase-activating protein (GAP). Its function is as follows. May be involved in endocytic processes and/or other transport pathways mediated by vesicle trafficking. May interact functionally with ROP protein. Ras proteins bind GDP/GTP and possess intrinsic GTPase activity. The sequence is that of Ras-like protein 2 (Ras64B) from Drosophila melanogaster (Fruit fly).